Consider the following 331-residue polypeptide: Anthranilate phosphoribosyltransferase (331 aa).

5-phospho-alpha-D-ribose 1-diphosphate is bound by residues G78, 81-82 (GD), T86, 88-91 (NVST), 106-114 (KHGNYSVSS), and S118. Position 78 (G78) interacts with anthranilate. Mg(2+) is bound at residue S90. Anthranilate is bound at residue N109. R164 contributes to the anthranilate binding site. Mg(2+) is bound by residues D222 and E223.

Belongs to the anthranilate phosphoribosyltransferase family. In terms of assembly, homodimer. Requires Mg(2+) as cofactor.

The enzyme catalyses N-(5-phospho-beta-D-ribosyl)anthranilate + diphosphate = 5-phospho-alpha-D-ribose 1-diphosphate + anthranilate. Its pathway is amino-acid biosynthesis; L-tryptophan biosynthesis; L-tryptophan from chorismate: step 2/5. Catalyzes the transfer of the phosphoribosyl group of 5-phosphorylribose-1-pyrophosphate (PRPP) to anthranilate to yield N-(5'-phosphoribosyl)-anthranilate (PRA). This Haloferax volcanii (strain ATCC 29605 / DSM 3757 / JCM 8879 / NBRC 14742 / NCIMB 2012 / VKM B-1768 / DS2) (Halobacterium volcanii) protein is Anthranilate phosphoribosyltransferase.